We begin with the raw amino-acid sequence, 577 residues long: Sulfite reductase [NADPH] hemoprotein beta-component (577 aa).

[4Fe-4S] cluster contacts are provided by Cys440, Cys446, Cys486, and Cys490. Cys490 contributes to the siroheme binding site.

It belongs to the nitrite and sulfite reductase 4Fe-4S domain family. As to quaternary structure, alpha(8)-beta(8). The alpha component is a flavoprotein, the beta component is a hemoprotein. The cofactor is siroheme. It depends on [4Fe-4S] cluster as a cofactor.

It catalyses the reaction hydrogen sulfide + 3 NADP(+) + 3 H2O = sulfite + 3 NADPH + 4 H(+). Its pathway is sulfur metabolism; hydrogen sulfide biosynthesis; hydrogen sulfide from sulfite (NADPH route): step 1/1. Component of the sulfite reductase complex that catalyzes the 6-electron reduction of sulfite to sulfide. This is one of several activities required for the biosynthesis of L-cysteine from sulfate. The polypeptide is Sulfite reductase [NADPH] hemoprotein beta-component (Vibrio cholerae serotype O1 (strain ATCC 39315 / El Tor Inaba N16961)).